We begin with the raw amino-acid sequence, 113 residues long: U11-theraphotoxin-Hhn1a (113 aa).

Residues methionine 1 to alanine 21 form the signal peptide. Residues aspartate 22–arginine 74 constitute a propeptide that is removed on maturation. 3 disulfides stabilise this stretch: cysteine 75/cysteine 90, cysteine 82/cysteine 95, and cysteine 89/cysteine 110.

This sequence belongs to the neurotoxin 14 (magi-1) family. 01 (HNTX-16) subfamily. As to expression, expressed by the venom gland.

The protein localises to the secreted. Its function is as follows. Probable ion channel inhibitor. In Cyriopagopus hainanus (Chinese bird spider), this protein is U11-theraphotoxin-Hhn1a.